The chain runs to 572 residues: Sulfite reductase [NADPH] hemoprotein beta-component (572 aa).

4 residues coordinate [4Fe-4S] cluster: C437, C443, C482, and C486. Residue C486 coordinates siroheme.

Belongs to the nitrite and sulfite reductase 4Fe-4S domain family. As to quaternary structure, alpha(8)-beta(8). The alpha component is a flavoprotein, the beta component is a hemoprotein. It depends on siroheme as a cofactor. [4Fe-4S] cluster is required as a cofactor.

The enzyme catalyses hydrogen sulfide + 3 NADP(+) + 3 H2O = sulfite + 3 NADPH + 4 H(+). It participates in sulfur metabolism; hydrogen sulfide biosynthesis; hydrogen sulfide from sulfite (NADPH route): step 1/1. Its function is as follows. Component of the sulfite reductase complex that catalyzes the 6-electron reduction of sulfite to sulfide. This is one of several activities required for the biosynthesis of L-cysteine from sulfate. The chain is Sulfite reductase [NADPH] hemoprotein beta-component from Staphylococcus epidermidis (strain ATCC 35984 / DSM 28319 / BCRC 17069 / CCUG 31568 / BM 3577 / RP62A).